The sequence spans 236 residues: Biosynthetic peptidoglycan transglycosylase (236 aa).

The chain crosses the membrane as a helical span at residues 17–37 (IVILVALALLALPYLLTILYG).

This sequence belongs to the glycosyltransferase 51 family.

It is found in the cell inner membrane. The catalysed reaction is [GlcNAc-(1-&gt;4)-Mur2Ac(oyl-L-Ala-gamma-D-Glu-L-Lys-D-Ala-D-Ala)](n)-di-trans,octa-cis-undecaprenyl diphosphate + beta-D-GlcNAc-(1-&gt;4)-Mur2Ac(oyl-L-Ala-gamma-D-Glu-L-Lys-D-Ala-D-Ala)-di-trans,octa-cis-undecaprenyl diphosphate = [GlcNAc-(1-&gt;4)-Mur2Ac(oyl-L-Ala-gamma-D-Glu-L-Lys-D-Ala-D-Ala)](n+1)-di-trans,octa-cis-undecaprenyl diphosphate + di-trans,octa-cis-undecaprenyl diphosphate + H(+). Its pathway is cell wall biogenesis; peptidoglycan biosynthesis. Peptidoglycan polymerase that catalyzes glycan chain elongation from lipid-linked precursors. In Rhodopseudomonas palustris (strain ATCC BAA-98 / CGA009), this protein is Biosynthetic peptidoglycan transglycosylase.